The chain runs to 150 residues: Ribosomal RNA large subunit methyltransferase H (150 aa).

Residues Ala-100 and 118-123 each bind S-adenosyl-L-methionine; that span reads LSEMTF.

Belongs to the RNA methyltransferase RlmH family. In terms of assembly, homodimer.

It is found in the cytoplasm. It catalyses the reaction pseudouridine(1915) in 23S rRNA + S-adenosyl-L-methionine = N(3)-methylpseudouridine(1915) in 23S rRNA + S-adenosyl-L-homocysteine + H(+). In terms of biological role, specifically methylates the pseudouridine at position 1915 (m3Psi1915) in 23S rRNA. In Helicobacter pylori (strain HPAG1), this protein is Ribosomal RNA large subunit methyltransferase H.